We begin with the raw amino-acid sequence, 386 residues long: All-trans-retinol dehydrogenase [NAD(+)] ADH7 (386 aa).

Zn(2+) is bound at residue Cys59. 60–64 (RTDDH) serves as a coordination point for NAD(+). Positions 80, 110, 113, 116, 124, and 186 each coordinate Zn(2+). NAD(+) contacts are provided by residues 211–216 (GLGGVG), Asp235, Lys240, 281–283 (IGH), 304–306 (VGV), 329–331 (CVF), and Arg381.

It belongs to the zinc-containing alcohol dehydrogenase family. Class-IV subfamily. Homodimer. Requires Zn(2+) as cofactor. Preferentially expressed in stomach.

It localises to the cytoplasm. The catalysed reaction is a primary alcohol + NAD(+) = an aldehyde + NADH + H(+). It catalyses the reaction 10-hydroxydecanoate + NAD(+) = 10-oxodecanoate + NADH + H(+). The enzyme catalyses all-trans-retinol + NAD(+) = all-trans-retinal + NADH + H(+). It carries out the reaction 9-cis-retinol + NAD(+) = 9-cis-retinal + NADH + H(+). The catalysed reaction is all-trans-3,4-didehydroretinol + NAD(+) = all-trans-3,4-didehydroretinal + NADH + H(+). It catalyses the reaction all-trans-4-hydroxyretinol + NAD(+) = all-trans-4-hydroxyretinal + NADH + H(+). The enzyme catalyses all-trans-4-oxoretinol + NAD(+) = all-trans-4-oxoretinal + NADH + H(+). It carries out the reaction 12-hydroxydodecanoate + NAD(+) = 12-oxododecanoate + NADH + H(+). The catalysed reaction is 16-hydroxyhexadecanoate + NAD(+) = 16-oxohexadecanoate + NADH + H(+). It catalyses the reaction hexan-1-ol + NAD(+) = hexanal + NADH + H(+). The enzyme catalyses (E)-hex-2-en-1-ol + NAD(+) = (E)-hex-2-enal + NADH + H(+). It carries out the reaction (E)-4-hydroxynon-2-en-1-ol + NAD(+) = (E)-4-hydroxynon-2-enal + NADH + H(+). Retinol oxidation is inhibited by the detergent Tween 80. Ethanol inhibits both all-trans-retinol and 9-cis-retinol oxidation. 13-cis-retinol is an effective competitive inhibitor of the 9-cis-retinol oxidation. All-trans-retinoic acid is a powerful inhibitor of all-trans-retinol oxidation. 13-cis-retinoic acid is a powerful inhibitor of all-trans-retinol oxidation. Cimetidine competitively inhibited ethanol oxidation. Catalyzes the NAD-dependent oxidation of all-trans-retinol, alcohol, and omega-hydroxy fatty acids and their derivatives. Oxidizes preferentially all trans-retinol, all-trans-4-hydroxyretinol, 9-cis-retinol, 2-hexenol, and long chain omega-hydroxy fatty acids such as juniperic acid. In vitro can also catalyze the NADH-dependent reduction of all-trans-retinal and aldehydes and their derivatives. Reduces preferentially all trans-retinal, all-trans-4-oxoretinal and hexanal. Catalyzes in the oxidative direction with higher efficiency. Therefore may participate in retinoid metabolism, fatty acid omega-oxidation, and elimination of cytotoxic aldehydes produced by lipid peroxidation. This is All-trans-retinol dehydrogenase [NAD(+)] ADH7 from Homo sapiens (Human).